A 217-amino-acid chain; its full sequence is Flagellin B2 (217 aa).

Positions 1-12 (MKVFEFLKGKRG) are excised as a propeptide.

The protein belongs to the archaeal flagellin family.

Its subcellular location is the archaeal flagellum. Functionally, flagellin is the subunit protein which polymerizes to form the filaments of archaeal flagella. The polypeptide is Flagellin B2 (flaB2) (Methanocaldococcus jannaschii (strain ATCC 43067 / DSM 2661 / JAL-1 / JCM 10045 / NBRC 100440) (Methanococcus jannaschii)).